The primary structure comprises 239 residues: UPF0502 protein Bcen_5249 (239 aa).

The disordered stretch occupies residues 196-239 (IRGAKGRTEAPRGRSGATQCAGSTDGERTRHRRRRTGRRVLIAS). Residues 224–233 (TRHRRRRTGR) are compositionally biased toward basic residues.

It belongs to the UPF0502 family.

This Burkholderia orbicola (strain AU 1054) protein is UPF0502 protein Bcen_5249.